The chain runs to 209 residues: uncharacterized protein (209 aa).

This is an uncharacterized protein from Sulfolobus islandicus rod-shaped virus 1 (SIRV-1).